Here is a 292-residue protein sequence, read N- to C-terminus: 4-diphosphocytidyl-2-C-methyl-D-erythritol kinase (292 aa).

Lysine 20 is a catalytic residue. 103–113 (PMGGGIGGGSS) serves as a coordination point for ATP. The active site involves aspartate 145.

Belongs to the GHMP kinase family. IspE subfamily.

It catalyses the reaction 4-CDP-2-C-methyl-D-erythritol + ATP = 4-CDP-2-C-methyl-D-erythritol 2-phosphate + ADP + H(+). Its pathway is isoprenoid biosynthesis; isopentenyl diphosphate biosynthesis via DXP pathway; isopentenyl diphosphate from 1-deoxy-D-xylulose 5-phosphate: step 3/6. Its function is as follows. Catalyzes the phosphorylation of the position 2 hydroxy group of 4-diphosphocytidyl-2C-methyl-D-erythritol. In Cupriavidus necator (strain ATCC 17699 / DSM 428 / KCTC 22496 / NCIMB 10442 / H16 / Stanier 337) (Ralstonia eutropha), this protein is 4-diphosphocytidyl-2-C-methyl-D-erythritol kinase.